The following is a 286-amino-acid chain: Shikimate dehydrogenase (NADP(+)) (286 aa).

Residues S19–S21 and T66 each bind shikimate. K70 (proton acceptor) is an active-site residue. Positions 91 and 107 each coordinate shikimate. NADP(+) contacts are provided by residues G129–A133 and L229. Y231 serves as a coordination point for shikimate. An NADP(+)-binding site is contributed by G252.

Belongs to the shikimate dehydrogenase family. As to quaternary structure, homodimer.

The catalysed reaction is shikimate + NADP(+) = 3-dehydroshikimate + NADPH + H(+). It functions in the pathway metabolic intermediate biosynthesis; chorismate biosynthesis; chorismate from D-erythrose 4-phosphate and phosphoenolpyruvate: step 4/7. Its function is as follows. Involved in the biosynthesis of the chorismate, which leads to the biosynthesis of aromatic amino acids. Catalyzes the reversible NADPH linked reduction of 3-dehydroshikimate (DHSA) to yield shikimate (SA). The sequence is that of Shikimate dehydrogenase (NADP(+)) from Prochlorococcus marinus (strain AS9601).